Reading from the N-terminus, the 329-residue chain is Thioredoxin-like fold domain-containing protein MRL7L homolog, chloroplastic (329 aa).

The N-terminal 46 residues, 1-46 (MALQSCCSSSASVPATCSALCLAEATRAASLFVRPRAAARRLVLAR), are a transit peptide targeting the chloroplast. The tract at residues 58–91 (AVQLVLGGRARDDGSESESSDDEDDDEPMQMTDE) is disordered. Acidic residues predominate over residues 72 to 85 (SESESSDDEDDDEP).

The protein resides in the plastid. It localises to the chloroplast stroma. Functionally, plays an essential role in early steps of chloroplast development. Involved in the regulation of plastid gene expression. Required for the proper function of the plastid transcriptional machinery and protein accumulation in thylakoid membranes. May function as molecular chaperone to ensure proper organization of the nucleoids in chloroplasts. The chain is Thioredoxin-like fold domain-containing protein MRL7L homolog, chloroplastic from Oryza sativa subsp. japonica (Rice).